Reading from the N-terminus, the 295-residue chain is Probable deoxyhypusine synthase (295 aa).

Lysine 267 acts as the Nucleophile in catalysis.

The protein belongs to the deoxyhypusine synthase family. NAD(+) serves as cofactor.

The enzyme catalyses [eIF5A protein]-L-lysine + spermidine = [eIF5A protein]-deoxyhypusine + propane-1,3-diamine. Its pathway is protein modification; eIF5A hypusination. Its function is as follows. Catalyzes the NAD-dependent oxidative cleavage of spermidine and the subsequent transfer of the butylamine moiety of spermidine to the epsilon-amino group of a specific lysine residue of the eIF-5A precursor protein to form the intermediate deoxyhypusine residue. The sequence is that of Probable deoxyhypusine synthase from Pyrobaculum calidifontis (strain DSM 21063 / JCM 11548 / VA1).